Consider the following 33-residue polypeptide: SHQDCYEALHKCMASHSKPFSCSMKFHMCLQQQ.

Contains two disulfide bonds. In terms of processing, up to two of the methionines may be oxidized to methionine sulfoxides.

It localises to the secreted. In terms of biological role, has antibacterial activity against Gram-negative bacteria E.coli JM109 and DH5-alpha, H.influenza IID 983, and V.vulnificus RIMD 2219009. Has antibacterial activity against Gram-positive bacteria S.aureus IID 1677, B.subtilis RIMD 0225014 and L.monocytogenes VIU206. Possesses antifungal activity against S.cerevisiae A581A, S.pombe IFO 1628, C.albicans ATCC 36232 and TIMM-1623, and C.tropicalis TIMM-0313. The chain is Dolabellanin-B2 from Dolabella auricularia (Shoulderblade sea cat).